Consider the following 213-residue polypeptide: Large ribosomal subunit protein uL1 (213 aa).

Belongs to the universal ribosomal protein uL1 family. In terms of assembly, part of the 50S ribosomal subunit.

Functionally, binds directly to 23S rRNA. Probably involved in E site tRNA release. Protein L1 is also a translational repressor protein, it controls the translation of its operon by binding to its mRNA. In Methanosarcina acetivorans (strain ATCC 35395 / DSM 2834 / JCM 12185 / C2A), this protein is Large ribosomal subunit protein uL1.